A 540-amino-acid chain; its full sequence is MTLNSLPVWPALQAHYEEIRDAHLRDWFAPANDRAPTRAERFTFEGGGLAADFSKNRLTDATLALLVRLAREAGVEARRDAMFAGETVNPTEGRAALHTALRANAPDAPFQAQVAAERAKMARFADAVRSGAWTGYTGKRIRHVVNIGIGGSDLGPKMVVHALHHVATPDIATHFVSNVDGADLARVLERIDPEETLAIIVSKTFTTLETMTNARSLRDWFVANGCPEGALAKHFVGVSANPAEVVKFGIAEANVFEMWDWVGGRYSLWSAVGLSIMIAIGPERFDELLAGARDMDEHFRTAPLERNLPVLQGLVGIWYRNFFGAQSYLVAPYSEALHYLPSYLQQLEMESNGKSARIDGAFVDYPTSAVTWGEPGTNGQHAFFQMLHQGPTLVPIDFIAVLTPEHPLASHHPKLLANCFAQSEALMLGRTLDEARKIAGPAKPELAPHLTFPGNRPTTTLLVDALTPRTLGALIALYEHKVLVQAAVWNINPFDQWGVELGKILGKVVEADLTAAQVDPAKHDSSTSALIARARKALGE.

Glu350 serves as the catalytic Proton donor. Residues His381 and Lys503 contribute to the active site.

The protein belongs to the GPI family.

It is found in the cytoplasm. It carries out the reaction alpha-D-glucose 6-phosphate = beta-D-fructose 6-phosphate. Its pathway is carbohydrate biosynthesis; gluconeogenesis. The protein operates within carbohydrate degradation; glycolysis; D-glyceraldehyde 3-phosphate and glycerone phosphate from D-glucose: step 2/4. Functionally, catalyzes the reversible isomerization of glucose-6-phosphate to fructose-6-phosphate. In Burkholderia mallei (strain NCTC 10247), this protein is Glucose-6-phosphate isomerase.